The chain runs to 297 residues: tRNA pseudouridine synthase B (297 aa).

Asp-41 acts as the Nucleophile in catalysis.

It belongs to the pseudouridine synthase TruB family. Type 1 subfamily.

It catalyses the reaction uridine(55) in tRNA = pseudouridine(55) in tRNA. Its function is as follows. Responsible for synthesis of pseudouridine from uracil-55 in the psi GC loop of transfer RNAs. This chain is tRNA pseudouridine synthase B, found in Synechococcus sp. (strain CC9311).